A 289-amino-acid chain; its full sequence is MTWFNRLKDYSKQQTDKLLNRYLTQIPSGIWRECPRCHSRFYYRRFGNFDVCPECGYGFRLTARKRLRMLTKDAVEWDADLVTKDPLSFPGYSEKLQRAQKITKLNESVWTGLALLDKRSVALGIMDPYFIMGSLGMITGEKLARLFERATLHELPVILFTASGGARMQEGIHSLMQMSKVTAAVNRHRQAGLLYIVVLTDPTTGGVIASFAMEADITIAEPKALIGFAGRRVIEQTVKQKLPADFQSAEQLQKNGFVDEIVPREHLTEELKLLLDMNQSNAWRANHDK.

Residues 30–289 (IWRECPRCHS…SNAWRANHDK (260 aa)) enclose the CoA carboxyltransferase N-terminal domain. The Zn(2+) site is built by Cys34, Cys37, Cys52, and Cys55. The segment at 34-55 (CPRCHSRFYYRRFGNFDVCPEC) adopts a C4-type zinc-finger fold.

It belongs to the AccD/PCCB family. As to quaternary structure, acetyl-CoA carboxylase is a heterohexamer composed of biotin carboxyl carrier protein (AccB), biotin carboxylase (AccC) and two subunits each of ACCase subunit alpha (AccA) and ACCase subunit beta (AccD). It depends on Zn(2+) as a cofactor.

The protein resides in the cytoplasm. It carries out the reaction N(6)-carboxybiotinyl-L-lysyl-[protein] + acetyl-CoA = N(6)-biotinyl-L-lysyl-[protein] + malonyl-CoA. The protein operates within lipid metabolism; malonyl-CoA biosynthesis; malonyl-CoA from acetyl-CoA: step 1/1. Functionally, component of the acetyl coenzyme A carboxylase (ACC) complex. Biotin carboxylase (BC) catalyzes the carboxylation of biotin on its carrier protein (BCCP) and then the CO(2) group is transferred by the transcarboxylase to acetyl-CoA to form malonyl-CoA. This chain is Acetyl-coenzyme A carboxylase carboxyl transferase subunit beta, found in Oenococcus oeni (strain ATCC BAA-331 / PSU-1).